A 378-amino-acid chain; its full sequence is Lipid-A-disaccharide synthase (378 aa).

The protein belongs to the LpxB family.

It carries out the reaction a lipid X + a UDP-2-N,3-O-bis[(3R)-3-hydroxyacyl]-alpha-D-glucosamine = a lipid A disaccharide + UDP + H(+). It participates in bacterial outer membrane biogenesis; LPS lipid A biosynthesis. Its function is as follows. Condensation of UDP-2,3-diacylglucosamine and 2,3-diacylglucosamine-1-phosphate to form lipid A disaccharide, a precursor of lipid A, a phosphorylated glycolipid that anchors the lipopolysaccharide to the outer membrane of the cell. The chain is Lipid-A-disaccharide synthase from Pseudomonas aeruginosa (strain UCBPP-PA14).